Reading from the N-terminus, the 185-residue chain is Elongation factor P (185 aa).

Belongs to the elongation factor P family.

The protein resides in the cytoplasm. Its pathway is protein biosynthesis; polypeptide chain elongation. Functionally, involved in peptide bond synthesis. Stimulates efficient translation and peptide-bond synthesis on native or reconstituted 70S ribosomes in vitro. Probably functions indirectly by altering the affinity of the ribosome for aminoacyl-tRNA, thus increasing their reactivity as acceptors for peptidyl transferase. The polypeptide is Elongation factor P (Trichodesmium erythraeum (strain IMS101)).